The following is a 282-amino-acid chain: B3 domain-containing protein At5g25475 (282 aa).

Positions 20–114 (WKSLSPGQTW…NLEVQIFKNN (95 aa)) form a DNA-binding region, TF-B3. The disordered stretch occupies residues 127 to 178 (PETEPFHPTPKKPHKETTPASSFASGSGCSANGGTNGRGKQRSSDVKNPERY). Over residues 144-159 (TPASSFASGSGCSANG) the composition is skewed to low complexity.

The protein localises to the nucleus. The chain is B3 domain-containing protein At5g25475 from Arabidopsis thaliana (Mouse-ear cress).